We begin with the raw amino-acid sequence, 181 residues long: Adenine phosphoribosyltransferase (181 aa).

It belongs to the purine/pyrimidine phosphoribosyltransferase family. Homodimer.

The protein localises to the cytoplasm. The catalysed reaction is AMP + diphosphate = 5-phospho-alpha-D-ribose 1-diphosphate + adenine. It participates in purine metabolism; AMP biosynthesis via salvage pathway; AMP from adenine: step 1/1. Catalyzes a salvage reaction resulting in the formation of AMP, that is energically less costly than de novo synthesis. In Chelativorans sp. (strain BNC1), this protein is Adenine phosphoribosyltransferase.